Consider the following 955-residue polypeptide: Protein translocase subunit SecA (955 aa).

Residues glutamine 87, 105–109, and aspartate 494 contribute to the ATP site; that span reads GEGKT. The disordered stretch occupies residues 861 to 955; it reads ASPAPAAPRP…KKAPRTKRKR (95 aa). Residues 874–888 show a composition bias toward low complexity; sequence QEAAQQAQGTAAPSA. A compositionally biased stretch (basic residues) spans 943–955; sequence SKGKKAPRTKRKR.

This sequence belongs to the SecA family. In terms of assembly, monomer and homodimer. Part of the essential Sec protein translocation apparatus which comprises SecA, SecYEG and auxiliary proteins SecDF. Other proteins may also be involved.

The protein resides in the cell membrane. It localises to the cytoplasm. It catalyses the reaction ATP + H2O + cellular proteinSide 1 = ADP + phosphate + cellular proteinSide 2.. In terms of biological role, part of the Sec protein translocase complex. Interacts with the SecYEG preprotein conducting channel. Has a central role in coupling the hydrolysis of ATP to the transfer of proteins into and across the cell membrane, serving as an ATP-driven molecular motor driving the stepwise translocation of polypeptide chains across the membrane. In Rhodococcus jostii (strain RHA1), this protein is Protein translocase subunit SecA.